The chain runs to 269 residues: Nus factor SuhB (269 aa).

A substrate-binding site is contributed by 85–88 (LDGK).

The protein belongs to the inositol monophosphatase superfamily. Homodimer. The rRNA transcription and antitermination complex (rrnTAC) consists of RNA polymerase (RNAP), NusA, NusB, NusE (rpsJ), NusG, SubB, ribosomal protein S4, DNA and precursor rRNA; S4 is more flexible than other subunits. Requires Mg(2+) as cofactor.

The protein localises to the cytoplasm. The enzyme catalyses a myo-inositol phosphate + H2O = myo-inositol + phosphate. In terms of biological role, part of the processive rRNA transcription and antitermination complex (rrnTAC). The complex forms an RNA-chaperone ring around the RNA exit tunnel of RNA polymerase (RNAP). It supports rapid transcription and antitermination of rRNA operons, cotranscriptional rRNA folding, and annealing of distal rRNA regions to allow correct ribosome biogenesis. This subunit may play a central role in organizing the structure. The sequence is that of Nus factor SuhB (suhB) from Buchnera aphidicola subsp. Schizaphis graminum (strain Sg).